Consider the following 1707-residue polypeptide: Latrophilin Cirl (1707 aa).

The Extracellular segment spans residues M1–R767. Residues A25–I114 enclose the SUEL-type lectin domain. An N-linked (GlcNAc...) asparagine glycan is attached at N142. The tract at residues G176–G301 is disordered. Polar residues-rich tracts occupy residues T185–A198 and N256–I265. The N-linked (GlcNAc...) asparagine glycan is linked to N256. Low complexity predominate over residues D275–S285. 6 N-linked (GlcNAc...) asparagine glycosylation sites follow: N302, N341, N398, N655, N703, and N730. Residues Y376 to S400 are disordered. Residues R561 to H754 enclose the GAIN-B domain. 2 disulfide bridges follow: C709–C736 and C724–C738. The GPS stretch occupies residues C709–H754. A helical membrane pass occupies residues I768 to L788. The Cytoplasmic portion of the chain corresponds to K789–T801. The chain crosses the membrane as a helical span at residues S802–I822. Residues E823–S828 are Extracellular-facing. Residues I829–F849 form a helical membrane-spanning segment. The Cytoplasmic segment spans residues C850–V875. Residues N876 to I896 traverse the membrane as a helical segment. Over D897 to F920 the chain is Extracellular. Residues V921–I941 form a helical membrane-spanning segment. Residues L942–S968 lie on the Cytoplasmic side of the membrane. Residues F969–A989 traverse the membrane as a helical segment. The Extracellular portion of the chain corresponds to K990 to Y999. A helical transmembrane segment spans residues G1000–I1020. At Q1021–K1707 the chain is on the cytoplasmic side. S1156 is subject to Phosphoserine. 2 disordered regions span residues A1169–Y1188 and K1236–L1260. Positions Q1172 to Q1181 are enriched in low complexity. Phosphoserine occurs at positions 1255 and 1262. Residues Q1316–L1326 show a composition bias toward low complexity. 4 disordered regions span residues Q1316–Q1335, G1450–R1538, A1563–G1582, and G1612–H1687. Phosphoserine occurs at positions 1327 and 1328. Residues G1456–R1481 show a composition bias toward low complexity. Acidic residues-rich tracts occupy residues D1489 to T1503 and C1513 to D1526. The segment covering Q1635–Q1650 has biased composition (polar residues). The span at S1651–H1673 shows a compositional bias: low complexity. Over residues P1674–R1686 the composition is skewed to basic residues.

This sequence belongs to the G-protein coupled receptor 2 family. LN-TM7 subfamily. Forms a heterodimer, consisting of a large extracellular region non-covalently linked to a seven-transmembrane moiety. Proteolytically cleaved into 2 subunits, an extracellular subunit and a seven-transmembrane subunit.

The protein localises to the cell membrane. This chain is Latrophilin Cirl, found in Drosophila yakuba (Fruit fly).